Consider the following 479-residue polypeptide: Cruciferin PGCRURSE5 (479 aa).

The N-terminal stretch at 1-23 (MVKLAHLLVATFGVLLVLNGCLA) is a signal peptide. 2 disulfides stabilise this stretch: Cys-37–Cys-70 and Cys-113–Cys-296. A Cupin type-1 1 domain is found at 42–241 (LDVLQPTETI…ALKMQLRLAQ (200 aa)). Residue Thr-116 is modified to Phosphothreonine. 3 disordered regions span residues 117–144 (FMDS…GFRD), 196–219 (RTFR…QQQN), and 271–291 (YESE…DNGL). Residues 124–141 (QGQGQQGQQGQQGQQQQG) are compositionally biased toward low complexity. Residues 302–451 (ENIDDPARAD…AFQISLEEAR (150 aa)) enclose the Cupin type-1 2 domain. 2 positions are modified to phosphothreonine: Thr-415 and Thr-440.

The protein belongs to the 11S seed storage protein (globulins) family. In terms of assembly, hexamer; each subunit is composed of an acidic and a basic chain derived from a single precursor and linked by a disulfide bond.

This is a seed storage protein. In Raphanus sativus (Radish), this protein is Cruciferin PGCRURSE5 (CRURS).